The sequence spans 105 residues: Protamine-2 (105 aa).

The segment at 1–74 is disordered; that stretch reads MVRYRMRSPS…RRSCRRRRRH (74 aa). A phosphoserine mark is found at serine 8 and serine 10. The segment covering 33–42 has biased composition (basic and acidic residues); it reads NPERVEDYGR. Positions 43 to 74 are enriched in basic residues; it reads THRGHHRHRRCSRKRLHRIHKRRRSCRRRRRH.

It belongs to the protamine P2 family. In terms of assembly, interacts with TDRP. Post-translationally, proteolytic processing into mature chains is required for histone eviction during spermatogenesis. Transition proteins (TNP1 and TNP2) are required for processing. As to expression, testis.

It is found in the nucleus. Its subcellular location is the chromosome. Functionally, protamines substitute for histones in the chromatin of sperm during the haploid phase of spermatogenesis. They compact sperm DNA into a highly condensed, stable and inactive complex. In Rattus tunneyi (Tunney's rat), this protein is Protamine-2 (Prm2).